Consider the following 134-residue polypeptide: Small ribosomal subunit protein uS9c (134 aa).

The protein belongs to the universal ribosomal protein uS9 family.

Its subcellular location is the plastid. It is found in the chloroplast. The polypeptide is Small ribosomal subunit protein uS9c (rps9) (Guillardia theta (Cryptophyte)).